A 116-amino-acid polypeptide reads, in one-letter code: Ribosome-binding factor A (116 aa).

It belongs to the RbfA family. As to quaternary structure, monomer. Binds 30S ribosomal subunits, but not 50S ribosomal subunits or 70S ribosomes.

Its subcellular location is the cytoplasm. Functionally, one of several proteins that assist in the late maturation steps of the functional core of the 30S ribosomal subunit. Associates with free 30S ribosomal subunits (but not with 30S subunits that are part of 70S ribosomes or polysomes). Required for efficient processing of 16S rRNA. May interact with the 5'-terminal helix region of 16S rRNA. This Malacoplasma penetrans (strain HF-2) (Mycoplasma penetrans) protein is Ribosome-binding factor A.